The primary structure comprises 104 residues: N(4)-acetylcytidine amidohydrolase (104 aa).

An ASCH domain is found at 7-104; that stretch reads TFFTRFEQDI…FWVIAFELVD (98 aa). The active-site Proton acceptor is the K21. The active-site Nucleophile is the T24. E74 functions as the Proton donor in the catalytic mechanism.

This sequence belongs to the N(4)-acetylcytidine amidohydrolase family.

It catalyses the reaction N(4)-acetylcytidine + H2O = cytidine + acetate + H(+). It carries out the reaction N(4)-acetyl-2'-deoxycytidine + H2O = 2'-deoxycytidine + acetate + H(+). The catalysed reaction is N(4)-acetylcytosine + H2O = cytosine + acetate + H(+). Its function is as follows. Catalyzes the hydrolysis of N(4)-acetylcytidine (ac4C). The sequence is that of N(4)-acetylcytidine amidohydrolase from Pasteurella multocida (strain Pm70).